Here is a 575-residue protein sequence, read N- to C-terminus: Delta-1-pyrroline-5-carboxylate dehydrogenase, mitochondrial (575 aa).

297 to 302 provides a ligand contact to NAD(+); sequence GKIQSG. Catalysis depends on Glu-317, which acts as the Proton acceptor. Catalysis depends on Cys-351, which acts as the Nucleophile.

It belongs to the aldehyde dehydrogenase family.

Its subcellular location is the mitochondrion inner membrane. It catalyses the reaction L-glutamate 5-semialdehyde + NAD(+) + H2O = L-glutamate + NADH + 2 H(+). It functions in the pathway amino-acid degradation; L-proline degradation into L-glutamate; L-glutamate from L-proline: step 2/2. In Saccharomyces cerevisiae (strain ATCC 204508 / S288c) (Baker's yeast), this protein is Delta-1-pyrroline-5-carboxylate dehydrogenase, mitochondrial (PUT2).